The following is a 595-amino-acid chain: Aspartate--tRNA(Asp/Asn) ligase (595 aa).

Glu178 is a binding site for L-aspartate. The segment at 202-205 (QLFK) is aspartate. L-aspartate is bound at residue Arg224. ATP contacts are provided by residues 224 to 226 (RDE) and Gln233. His458 provides a ligand contact to L-aspartate. An ATP-binding site is contributed by Glu488. Position 495 (Arg495) interacts with L-aspartate. An ATP-binding site is contributed by 540–543 (GLDR).

Belongs to the class-II aminoacyl-tRNA synthetase family. Type 1 subfamily. Homodimer.

The protein resides in the cytoplasm. It catalyses the reaction tRNA(Asx) + L-aspartate + ATP = L-aspartyl-tRNA(Asx) + AMP + diphosphate. In terms of biological role, aspartyl-tRNA synthetase with relaxed tRNA specificity since it is able to aspartylate not only its cognate tRNA(Asp) but also tRNA(Asn). Reaction proceeds in two steps: L-aspartate is first activated by ATP to form Asp-AMP and then transferred to the acceptor end of tRNA(Asp/Asn). The sequence is that of Aspartate--tRNA(Asp/Asn) ligase from Trichodesmium erythraeum (strain IMS101).